A 210-amino-acid polypeptide reads, in one-letter code: Ion-translocating oxidoreductase complex subunit G (210 aa).

A helical transmembrane segment spans residues 9–29; it reads SLVLALFAIAATALVTITYAL. Position 176 is an FMN phosphoryl threonine (threonine 176).

This sequence belongs to the RnfG family. In terms of assembly, the complex is composed of six subunits: RnfA, RnfB, RnfC, RnfD, RnfE and RnfG. The cofactor is FMN.

It localises to the cell inner membrane. In terms of biological role, part of a membrane-bound complex that couples electron transfer with translocation of ions across the membrane. The sequence is that of Ion-translocating oxidoreductase complex subunit G from Aliivibrio fischeri (strain ATCC 700601 / ES114) (Vibrio fischeri).